Reading from the N-terminus, the 512-residue chain is Maturase K (512 aa).

It belongs to the intron maturase 2 family. MatK subfamily.

Its subcellular location is the plastid. The protein resides in the chloroplast. In terms of biological role, usually encoded in the trnK tRNA gene intron. Probably assists in splicing its own and other chloroplast group II introns. In Lilium tsingtauense (Twilight lily), this protein is Maturase K.